A 241-amino-acid polypeptide reads, in one-letter code: Phosphoribosylaminoimidazole-succinocarboxamide synthase (241 aa).

The protein belongs to the SAICAR synthetase family.

The enzyme catalyses 5-amino-1-(5-phospho-D-ribosyl)imidazole-4-carboxylate + L-aspartate + ATP = (2S)-2-[5-amino-1-(5-phospho-beta-D-ribosyl)imidazole-4-carboxamido]succinate + ADP + phosphate + 2 H(+). It participates in purine metabolism; IMP biosynthesis via de novo pathway; 5-amino-1-(5-phospho-D-ribosyl)imidazole-4-carboxamide from 5-amino-1-(5-phospho-D-ribosyl)imidazole-4-carboxylate: step 1/2. The chain is Phosphoribosylaminoimidazole-succinocarboxamide synthase from Methanoculleus marisnigri (strain ATCC 35101 / DSM 1498 / JR1).